The following is a 279-amino-acid chain: DegV domain-containing protein M6_Spy1246 (279 aa).

The DegV domain occupies 4–278 (IKIVTDSSIT…EGAFAVMVRY (275 aa)). Positions 62 and 95 each coordinate hexadecanoate.

May bind long-chain fatty acids, such as palmitate, and may play a role in lipid transport or fatty acid metabolism. This is DegV domain-containing protein M6_Spy1246 from Streptococcus pyogenes serotype M6 (strain ATCC BAA-946 / MGAS10394).